The following is a 112-amino-acid chain: Putative regulatory protein DP2861 (112 aa).

Belongs to the RemA family.

This chain is Putative regulatory protein DP2861, found in Desulfotalea psychrophila (strain LSv54 / DSM 12343).